Reading from the N-terminus, the 116-residue chain is Iron-sulfur cluster insertion protein ErpA (116 aa).

Iron-sulfur cluster contacts are provided by cysteine 44, cysteine 108, and cysteine 110.

It belongs to the HesB/IscA family. Homodimer. Requires iron-sulfur cluster as cofactor.

Required for insertion of 4Fe-4S clusters for at least IspG. This Pseudomonas putida (strain ATCC 47054 / DSM 6125 / CFBP 8728 / NCIMB 11950 / KT2440) protein is Iron-sulfur cluster insertion protein ErpA.